We begin with the raw amino-acid sequence, 386 residues long: Adiponectin receptor protein 2 (386 aa).

The disordered stretch occupies residues 1–72; that stretch reads MNEPAKHRLG…ECHDDNSQED (72 aa). At 1-147 the chain is on the cytoplasmic side; it reads MNEPAKHRLG…SIFRIHTETG (147 aa). A compositionally biased stretch (basic and acidic residues) spans 15–31; sequence PEPDIRLRKGHQLDDTR. The span at 58–72 shows a compositional bias: acidic residues; sequence SPEEPECHDDNSQED. The helical transmembrane segment at 148 to 168 threads the bilayer; it reads NIWTHLLGCVFFLCLGIFYMF. Residues 169–181 are Extracellular-facing; it reads RPNISFVAPLQEK. The helical transmembrane segment at 182 to 202 threads the bilayer; sequence VVFGLFFLGAILCLSFSWLFH. Position 202 (H202) interacts with Zn(2+). The Cytoplasmic segment spans residues 203 to 213; sequence TVYCHSEGVSR. A helical transmembrane segment spans residues 214–234; sequence LFSKLDYSGIALLIMGSFVPW. At 235 to 245 the chain is on the extracellular side; that stretch reads LYYSFYCNPQP. Residues 246-266 traverse the membrane as a helical segment; the sequence is CFIYLIVICVLGIAAIIVSQW. The Cytoplasmic segment spans residues 267–273; it reads DMFATPQ. A helical membrane pass occupies residues 274-294; it reads YRGVRAGVFVGLGLSGIIPTL. Over 295 to 309 the chain is Extracellular; the sequence is HYVISEGFLKAATIG. A helical transmembrane segment spans residues 310 to 330; the sequence is QIGWLMLMASLYITGAALYAA. Residues 331-348 are Cytoplasmic-facing; sequence RIPERFFPGKCDIWFHSH. The Zn(2+) site is built by H348 and H352. The helical transmembrane segment at 349–369 threads the bilayer; that stretch reads QLFHIFVVAGAFVHFHGVSNL. At 370–386 the chain is on the extracellular side; that stretch reads QEFRFMIGGGCTEEDAL.

This sequence belongs to the ADIPOR family. As to quaternary structure, may form homooligomers and heterooligomers with ADIPOR1. Interacts with APPL2 (via BAR domain); ADIPOQ dissociates this interaction. Detected in liver and quadriceps muscle (at protein level). Highly expressed in liver. Highly expressed in white adipose tissue, and at intermediate levels in brown adipose tissue. Expressed at intermediate level in heart, kidney, lung and skeletal muscle. Weakly expressed in brain, spleen and testis.

The protein localises to the cell membrane. Its function is as follows. Receptor for ADIPOQ, an essential hormone secreted by adipocytes that regulates glucose and lipid metabolism. Required for normal body fat and glucose homeostasis. ADIPOQ-binding activates a signaling cascade that leads to increased PPARA activity, and ultimately to increased fatty acid oxidation and glucose uptake. Has intermediate affinity for globular and full-length adiponectin. Required for normal revascularization after chronic ischemia caused by severing of blood vessels. The polypeptide is Adiponectin receptor protein 2 (Mus musculus (Mouse)).